A 293-amino-acid chain; its full sequence is Phosphoribosylaminoimidazole-succinocarboxamide synthase (293 aa).

Belongs to the SAICAR synthetase family.

It carries out the reaction 5-amino-1-(5-phospho-D-ribosyl)imidazole-4-carboxylate + L-aspartate + ATP = (2S)-2-[5-amino-1-(5-phospho-beta-D-ribosyl)imidazole-4-carboxamido]succinate + ADP + phosphate + 2 H(+). Its pathway is purine metabolism; IMP biosynthesis via de novo pathway; 5-amino-1-(5-phospho-D-ribosyl)imidazole-4-carboxamide from 5-amino-1-(5-phospho-D-ribosyl)imidazole-4-carboxylate: step 1/2. The chain is Phosphoribosylaminoimidazole-succinocarboxamide synthase from Bordetella parapertussis (strain 12822 / ATCC BAA-587 / NCTC 13253).